A 587-amino-acid chain; its full sequence is Kelch-like ECH-associated protein 1B (587 aa).

In terms of domain architecture, BTB spans C44 to E117. The 101-residue stretch at I153–L253 folds into the BACK domain. Kelch repeat units follow at residues L292–G337, L338–G388, M389–R435, L436–N482, I484–G529, and R530–E576.

It belongs to the KEAP1 family. As to quaternary structure, homodimer and heterodimer; heterodimerizes with keap1a. Component of the BCR(KEAP1) E3 ubiquitin ligase complex, at least composed of 2 molecules of cul3, 2 molecules of keap1 (keap1a and/or keap1b), and rbx1. Interacts with nfe2l2/nrf2; the interaction is direct. In terms of processing, non-enzymatic covalent modifications of reactive cysteines by electrophile metabolites inactivate the BCR(KEAP1) complex. In terms of tissue distribution, widely expressed.

It localises to the cytoplasm. The protein localises to the nucleus. Its pathway is protein modification; protein ubiquitination. With respect to regulation, ubiquitin ligase activity of the BCR(KEAP1) complex is inhibited by oxidative stress and electrophile metabolites such as sulforaphane. Electrophile metabolites react with reactive cysteine residues in keap1 and trigger non-enzymatic covalent modifications of these cysteine residues, leading to inactivate the ubiquitin ligase activity of the BCR(KEAP1) complex. Substrate-specific adapter of a BCR (BTB-CUL3-RBX1) E3 ubiquitin ligase complex that regulates the response to oxidative stress by targeting nfe2l2/nrf2 for ubiquitination. Keap1 acts as a key sensor of oxidative and electrophilic stress: in normal conditions, the BCR(KEAP1) complex mediates ubiquitination and degradation of nfe2l2/nrf2, a transcription factor regulating expression of many cytoprotective genes. In response to oxidative stress, different electrophile metabolites trigger non-enzymatic covalent modifications of highly reactive cysteine residues in KEAP1, leading to inactivate the ubiquitin ligase activity of the BCR(KEAP1) complex, promoting nfe2l2/nrf2 nuclear accumulation and expression of phase II detoxifying enzymes. This Danio rerio (Zebrafish) protein is Kelch-like ECH-associated protein 1B.